The following is a 341-amino-acid chain: Heat-shock protein cognate (HSC) co-chaperone sgt12 (341 aa).

Residues 86–123 are disordered; that stretch reads PSKEPASAGAQAQSTEAQQPKAGAPTPESDKLKSEGNA. TPR repeat units follow at residues 114–147, 148–181, and 182–215; these read SDKL…APAN, PIYL…DPKY, and SKAW…EGNG. The disordered stretch occupies residues 232–280; sequence EEANRGAEPPADDVDDAAGASRGAGGMPDLSSLASMLGGRGGGGGGMPD. The span at 269–278 shows a compositional bias: gly residues; the sequence is GGRGGGGGGM.

Belongs to the SGT family. In terms of assembly, forms homodimers. Component of the get4/get5/sgt2 sorting complex. Dimers of sgt2 bind directly a single get5. Binds HSC family members ssa1, sse1, hsp104 and hsc82 via its TPR domain.

The protein resides in the cytoplasm. Functionally, heat-shock protein cognate (HSC) co-chaperone that preferentially binds endoplasmic reticulum-destined tail-anchored (TA) proteins and directs them to the GET (guided entry of TA proteins) pathway via get4 and get5. Get4 and get5 form an obligate complex that catalyzes the transfer of tail-anchored proteins destined to the endoplasmic reticulum from sgt2 to the cytosolic targeting factor which then targets the TA protein to the ER membrane via get1/get2. This chain is Heat-shock protein cognate (HSC) co-chaperone sgt12, found in Aspergillus fumigatus (strain ATCC MYA-4609 / CBS 101355 / FGSC A1100 / Af293) (Neosartorya fumigata).